A 553-amino-acid polypeptide reads, in one-letter code: Arginine--tRNA ligase (553 aa).

Positions Ala130–His140 match the 'HIGH' region motif.

It belongs to the class-I aminoacyl-tRNA synthetase family. In terms of assembly, monomer.

Its subcellular location is the cytoplasm. It catalyses the reaction tRNA(Arg) + L-arginine + ATP = L-arginyl-tRNA(Arg) + AMP + diphosphate. In Staphylococcus aureus (strain MRSA252), this protein is Arginine--tRNA ligase.